Reading from the N-terminus, the 698-residue chain is Elongation factor G (698 aa).

Positions 10 to 285 (AGTRNIGIMA…AVVDFLPNPL (276 aa)) constitute a tr-type G domain. GTP contacts are provided by residues 19-26 (AHIDAGKT), 83-87 (DTPGH), and 137-140 (NKMD).

Belongs to the TRAFAC class translation factor GTPase superfamily. Classic translation factor GTPase family. EF-G/EF-2 subfamily.

Its subcellular location is the cytoplasm. Functionally, catalyzes the GTP-dependent ribosomal translocation step during translation elongation. During this step, the ribosome changes from the pre-translocational (PRE) to the post-translocational (POST) state as the newly formed A-site-bound peptidyl-tRNA and P-site-bound deacylated tRNA move to the P and E sites, respectively. Catalyzes the coordinated movement of the two tRNA molecules, the mRNA and conformational changes in the ribosome. This Frankia casuarinae (strain DSM 45818 / CECT 9043 / HFP020203 / CcI3) protein is Elongation factor G.